The sequence spans 227 residues: tRNA (guanine-N(1)-)-methyltransferase (227 aa).

Residues Gly111 and 135-140 (LGDYVL) contribute to the S-adenosyl-L-methionine site.

This sequence belongs to the RNA methyltransferase TrmD family. As to quaternary structure, homodimer.

It is found in the cytoplasm. It catalyses the reaction guanosine(37) in tRNA + S-adenosyl-L-methionine = N(1)-methylguanosine(37) in tRNA + S-adenosyl-L-homocysteine + H(+). Its function is as follows. Specifically methylates guanosine-37 in various tRNAs. The chain is tRNA (guanine-N(1)-)-methyltransferase from Leifsonia xyli subsp. xyli (strain CTCB07).